The primary structure comprises 645 residues: Beta-galactosidase BgaA (645 aa).

Arg-102 contacts substrate. Position 106 (Cys-106) interacts with Zn(2+). Residue Asn-140 participates in substrate binding. Glu-141 acts as the Proton donor in catalysis. 3 residues coordinate Zn(2+): Cys-150, Cys-152, and Cys-155. Glu-312 functions as the Nucleophile in the catalytic mechanism. Substrate-binding positions include Trp-320 and 360–363 (EQMH).

This sequence belongs to the glycosyl hydrolase 42 family.

It catalyses the reaction Hydrolysis of terminal non-reducing beta-D-galactose residues in beta-D-galactosides.. Hydrolyzes chromogen 5-bromo-4-chloro-3-indolyl-beta-D-galactopyranoside (X-Gal) and p-nitrophenyl-beta-D-galactoside (pNPGal). The sequence is that of Beta-galactosidase BgaA from Thermus sp.